The sequence spans 763 residues: Thyrotropin receptor (763 aa).

Residues 1–21 (MRPTPLLRLALFLVLPSSLGG) form the signal peptide. The Extracellular segment spans residues 22-412 (ERCPSPPCEC…EFNPCEDIMG (391 aa)). Cys-31 and Cys-41 form a disulfide bridge. The LRR 1 repeat unit spans residues 51 to 74 (PPSTQTLKFIETHLKTIPSRAFSN). N-linked (GlcNAc...) asparagine glycans are attached at residues Asn-77 and Asn-99. LRR repeat units lie at residues 125–150 (LPLL…IYST), 151–174 (DVFF…AFQG), 176–199 (CNET…AFNG), 201–223 (KLDA…AFAG), and 225–248 (YSGP…GLEH). N-linked (GlcNAc...) asparagine glycans are attached at residues Asn-177 and Asn-198. The N-linked (GlcNAc...) asparagine glycan is linked to Asn-302. Tyr-384 is subject to Sulfotyrosine. Residues 413–440 (YKFLRIVVWFVSLLALLGNVFVLVILLT) traverse the membrane as a helical segment. The Cytoplasmic portion of the chain corresponds to 441-449 (SHYKLTVPR). A helical membrane pass occupies residues 450-472 (FLMCNLAFADFCMGLYLLLIASV). Over 473-493 (DLYTQSEYYNHAIDWQTGPGC) the chain is Extracellular. Cys-493 and Cys-568 are joined by a disulfide. A helical membrane pass occupies residues 494 to 516 (NTAGFFTVFASELSVYTLTVITL). At 517-536 (ERWHAITFAMRLDRKIRLWH) the chain is on the cytoplasmic side. The chain crosses the membrane as a helical span at residues 537-559 (AYVIMLGGWVCCFLLALLPLVGI). Topologically, residues 560-579 (SSYAKVSICLPMDTETPLAL) are extracellular. A helical membrane pass occupies residues 580-601 (AYIILVLLLNIIAFIIVCACYV). Residues 602 to 624 (KIYITVRNPHYNPGDKDTRIAKR) lie on the Cytoplasmic side of the membrane. A helical transmembrane segment spans residues 625–648 (MAVLIFTDFMCMAPISFYALSALM). Residues 649–659 (NKPLITVTNSK) are Extracellular-facing. A helical transmembrane segment spans residues 660–681 (ILLVLFYPLNSCANPFLYAIFT). At 682 to 763 (KAFQRDVFML…TSKEYKRTVL (82 aa)) the chain is on the cytoplasmic side. A disordered region spans residues 742 to 763 (ENSHLTPKQQDQTSKEYKRTVL). Positions 744–753 (SHLTPKQQDQ) are enriched in polar residues. Residues 754–763 (TSKEYKRTVL) are compositionally biased toward basic and acidic residues. Positions 761-763 (TVL) match the PDZ-binding motif.

The protein belongs to the G-protein coupled receptor 1 family. FSH/LSH/TSH subfamily. As to quaternary structure, interacts with heterodimer GPHA2:GPHB5; this interaction stimulates cAMP production. Interacts (via the PDZ-binding motif) with SCRIB; regulates TSHR trafficking and function. Glycosylated. Post-translationally, sulfated. Sulfation on Tyr-384 plays a role in thyrotropin receptor binding and activation.

It localises to the cell membrane. The protein resides in the basolateral cell membrane. Its function is as follows. Receptor for the thyroid-stimulating hormone (TSH) or thyrotropin. Also acts as a receptor for the heterodimeric glycoprotein hormone (GPHA2:GPHB5) or thyrostimulin. The activity of this receptor is mediated by G proteins which activate adenylate cyclase. Plays a central role in controlling thyroid cell metabolism. The protein is Thyrotropin receptor (TSHR) of Bos taurus (Bovine).